A 124-amino-acid chain; its full sequence is MSWVLIGVAGAAGAVARLLVGAWIDGRPGGRAFPWGTFAVNIAGSLLLGLLTGLVVGRGWLAPEVKVVLGAGFLGAFTTFSTWLLDLHEALRRGDHRAAFVNAALSTGLGLLAAWLGLALGWGR.

A run of 4 helical transmembrane segments spans residues 4–24 (VLIG…GAWI), 36–56 (GTFA…GLVV), 67–87 (VVLG…LLDL), and 103–123 (AALS…LGWG). Na(+) is bound by residues G75 and T78.

The protein belongs to the fluoride channel Fluc/FEX (TC 1.A.43) family.

The protein resides in the cell membrane. It catalyses the reaction fluoride(in) = fluoride(out). Na(+) is not transported, but it plays an essential structural role and its presence is essential for fluoride channel function. In terms of biological role, fluoride-specific ion channel. Important for reducing fluoride concentration in the cell, thus reducing its toxicity. The protein is Fluoride-specific ion channel FluC 1 of Symbiobacterium thermophilum (strain DSM 24528 / JCM 14929 / IAM 14863 / T).